Reading from the N-terminus, the 89-residue chain is Small ribosomal subunit protein uS15 (89 aa).

Belongs to the universal ribosomal protein uS15 family. In terms of assembly, part of the 30S ribosomal subunit. Forms a bridge to the 50S subunit in the 70S ribosome, contacting the 23S rRNA.

In terms of biological role, one of the primary rRNA binding proteins, it binds directly to 16S rRNA where it helps nucleate assembly of the platform of the 30S subunit by binding and bridging several RNA helices of the 16S rRNA. Its function is as follows. Forms an intersubunit bridge (bridge B4) with the 23S rRNA of the 50S subunit in the ribosome. In Carboxydothermus hydrogenoformans (strain ATCC BAA-161 / DSM 6008 / Z-2901), this protein is Small ribosomal subunit protein uS15.